The chain runs to 372 residues: Testis-specific serine/threonine-protein kinase 5 (372 aa).

Residues 27–302 (LLSSKKIGSG…LQQVAAHCWM (276 aa)) form the Protein kinase domain. ATP is bound by residues 33–41 (IGSGAFSKV) and K72. D173 acts as the Proton acceptor in catalysis. Positions 314 to 372 (GAPREQDHSWSTVAPDNTEPDRDTRHARSKGSSSSSGRTSPRRPSLAQLCNTWKPAPEQ) are disordered. The span at 343 to 358 (KGSSSSSGRTSPRRPS) shows a compositional bias: low complexity.

The protein belongs to the protein kinase superfamily. CAMK Ser/Thr protein kinase family. The cofactor is Mg(2+). In terms of processing, autophosphorylated.

It catalyses the reaction L-seryl-[protein] + ATP = O-phospho-L-seryl-[protein] + ADP + H(+). It carries out the reaction L-threonyl-[protein] + ATP = O-phospho-L-threonyl-[protein] + ADP + H(+). With respect to regulation, activated by phosphorylation on Thr-207, potentially by autophosphorylation. May be involved in a signaling pathway during male germ cell development or mature sperm function. The polypeptide is Testis-specific serine/threonine-protein kinase 5 (Mus musculus (Mouse)).